Here is a 267-residue protein sequence, read N- to C-terminus: Tryptophan synthase alpha chain (267 aa).

Residues Glu49 and Asp60 each act as proton acceptor in the active site.

It belongs to the TrpA family. In terms of assembly, tetramer of two alpha and two beta chains.

The enzyme catalyses (1S,2R)-1-C-(indol-3-yl)glycerol 3-phosphate + L-serine = D-glyceraldehyde 3-phosphate + L-tryptophan + H2O. It participates in amino-acid biosynthesis; L-tryptophan biosynthesis; L-tryptophan from chorismate: step 5/5. In terms of biological role, the alpha subunit is responsible for the aldol cleavage of indoleglycerol phosphate to indole and glyceraldehyde 3-phosphate. This is Tryptophan synthase alpha chain from Citrifermentans bemidjiense (strain ATCC BAA-1014 / DSM 16622 / JCM 12645 / Bem) (Geobacter bemidjiensis).